An 82-amino-acid polypeptide reads, in one-letter code: Small ribosomal subunit protein bS16 (82 aa).

It belongs to the bacterial ribosomal protein bS16 family.

This Tolumonas auensis (strain DSM 9187 / NBRC 110442 / TA 4) protein is Small ribosomal subunit protein bS16.